A 1322-amino-acid chain; its full sequence is Mediator of RNA polymerase II transcription subunit 12 (1322 aa).

The interval 1–21 (MSPSKYLLTPPEELHPLTDSN) is disordered.

Belongs to the Mediator complex subunit 12 family. As to quaternary structure, component of the SRB8-11 complex, which itself associates with the Mediator complex.

It is found in the nucleus. In terms of biological role, component of the SRB8-11 complex. The SRB8-11 complex is a regulatory module of the Mediator complex which is itself involved in regulation of basal and activated RNA polymerase II-dependent transcription. The SRB8-11 complex may be involved in the transcriptional repression of a subset of genes regulated by Mediator. It may inhibit the association of the Mediator complex with RNA polymerase II to form the holoenzyme complex. The sequence is that of Mediator of RNA polymerase II transcription subunit 12 (SRB8) from Kluyveromyces lactis (strain ATCC 8585 / CBS 2359 / DSM 70799 / NBRC 1267 / NRRL Y-1140 / WM37) (Yeast).